Reading from the N-terminus, the 98-residue chain is Large ribosomal subunit protein uL23 (98 aa).

This sequence belongs to the universal ribosomal protein uL23 family. In terms of assembly, part of the 50S ribosomal subunit. Contacts protein L29, and trigger factor when it is bound to the ribosome.

In terms of biological role, one of the early assembly proteins it binds 23S rRNA. One of the proteins that surrounds the polypeptide exit tunnel on the outside of the ribosome. Forms the main docking site for trigger factor binding to the ribosome. In Lactobacillus gasseri (strain ATCC 33323 / DSM 20243 / BCRC 14619 / CIP 102991 / JCM 1131 / KCTC 3163 / NCIMB 11718 / NCTC 13722 / AM63), this protein is Large ribosomal subunit protein uL23.